Here is a 543-residue protein sequence, read N- to C-terminus: CBS domain-containing protein CBSCBSPB1 (543 aa).

Positions 1-35 (MASQGGPRRSLSVTTASLHGKKKSMDMAERGLDTG) are disordered. Ser-17 is modified (phosphoserine). A compositionally biased stretch (basic and acidic residues) spans 23-35 (KSMDMAERGLDTG). CBS domains follow at residues 59–118 (RLSK…NVEE), 125–183 (MTKN…RAAE), 225–285 (IIPD…LPPS), and 293–350 (MTQN…AGTT). Residues 372-393 (LSPNEDDEDSRSESSMKVASEA) form a disordered region. The region spanning 402–489 (ANTFSFKIED…KSLRLHLDDS (88 aa)) is the PB1 domain. Residues 518 to 538 (AYSGVAAGAALVAGLGFMAFL) form a helical membrane-spanning segment.

It is found in the membrane. The chain is CBS domain-containing protein CBSCBSPB1 (CBSCBSPB1) from Arabidopsis thaliana (Mouse-ear cress).